A 391-amino-acid chain; its full sequence is S-adenosylmethionine synthase (391 aa).

Histidine 14 is a binding site for ATP. Aspartate 16 contributes to the Mg(2+) binding site. Glutamate 42 contributes to the K(+) binding site. L-methionine is bound by residues glutamate 55 and glutamine 98. Residues 98–108 (QSVDIAMGVDE) are flexible loop. Residues 172–174 (DGK), 238–239 (RF), aspartate 247, 253–254 (RK), alanine 270, and lysine 274 each bind ATP. Aspartate 247 is an L-methionine binding site. Lysine 278 contributes to the L-methionine binding site.

It belongs to the AdoMet synthase family. As to quaternary structure, homotetramer; dimer of dimers. Mg(2+) serves as cofactor. K(+) is required as a cofactor.

The protein resides in the cytoplasm. The enzyme catalyses L-methionine + ATP + H2O = S-adenosyl-L-methionine + phosphate + diphosphate. It participates in amino-acid biosynthesis; S-adenosyl-L-methionine biosynthesis; S-adenosyl-L-methionine from L-methionine: step 1/1. Catalyzes the formation of S-adenosylmethionine (AdoMet) from methionine and ATP. The overall synthetic reaction is composed of two sequential steps, AdoMet formation and the subsequent tripolyphosphate hydrolysis which occurs prior to release of AdoMet from the enzyme. This Clostridium botulinum (strain Kyoto / Type A2) protein is S-adenosylmethionine synthase.